Here is a 385-residue protein sequence, read N- to C-terminus: AA13 family lytic polysaccharide monooxygenase aasA (385 aa).

The signal sequence occupies residues 1 to 18 (MKSLLALVAGNLVTAVSG). H19 provides a ligand contact to Cu(2+). H19 is modified (methylhistidine). The interval 19 to 248 (HGYLTVPASR…AQVYLHCADI (230 aa)) is N-terminal catalytic module. 7 disulfides stabilise this stretch: C40/C43, C66/C245, C102/C203, C118/C145, C153/C161, C167/C173, and C181/C192. H109 is a binding site for Cu(2+). N-linked (GlcNAc...) asparagine glycosylation is present at N120. Y242 contributes to the Cu(2+) binding site. Residues 254 to 276 (SGSSPSPTSTTSTATSTTTPSST) are disordered. Positions 256–276 (SSPSPTSTTSTATSTTTPSST) are enriched in low complexity. Positions 278–385 (CASAISIPVT…TTATESGAWR (108 aa)) constitute a CBM20 domain. The N-linked (GlcNAc...) asparagine glycan is linked to N364.

This sequence belongs to the polysaccharide monooxygenase AA13 family. Cu(2+) is required as a cofactor. In terms of processing, the catalytically essential N-terminal histidine His-19 is post-translationally modified by methylation to prevent protonation of the histidine side chain, and protect the critical active site of the enzyme from oxidative damage.

The protein localises to the secreted. It catalyses the reaction starch + reduced acceptor + O2 = D-glucono-1,5-lactone-terminated malto-oligosaccharides + short-chain malto-oligosaccharides + acceptor + H2O.. Starch-active polysaccharide monooxygenase that oxidizes the C1 position of starch substrates, but not in cellulose, chitin, polygalacturonan or esterified pectin, nor with Arabidopsis stem cell walls. Catalysis by LPMOs requires the reduction of the active-site copper from Cu(II) to Cu(I) by a reducing agent and H(2)O(2) or O(2) as a cosubstrate. This is AA13 family lytic polysaccharide monooxygenase aasA from Emericella nidulans (strain FGSC A4 / ATCC 38163 / CBS 112.46 / NRRL 194 / M139) (Aspergillus nidulans).